Reading from the N-terminus, the 173-residue chain is MLVTLPIFYLSILTLFLLTFSWLISQQLKTIFLLESQFQYFLDKSKNDELGIEDGFAFSKVCIAKKYFTRAIIESHLVLKKNSLLESPENAAIIAKLYNMLGFIYYKADQKKLAKNFYERAIEVDGNYIVALNNLAKIYEDTKNILKAEALYDKVLNIAKSNKIANTHKKFIK.

TPR repeat units follow at residues 52–89 (IEDGFAFSKVCIAKKYFTRAIIESHLVLKKNSLLESPE), 95–128 (AKLYNMLGFIYYKADQKKLAKNFYERAIEVDGNY), and 129–162 (IVALNNLAKIYEDTKNILKAEALYDKVLNIAKSN).

The protein belongs to the ycf37 family.

Its subcellular location is the plastid. It is found in the chloroplast. This is an uncharacterized protein from Porphyra purpurea (Red seaweed).